Reading from the N-terminus, the 144-residue chain is Large ribosomal subunit protein uL14 (144 aa).

The protein belongs to the universal ribosomal protein uL14 family. Part of the 50S ribosomal subunit. Forms a cluster with proteins L3 and L24e, part of which may contact the 16S rRNA in 2 intersubunit bridges.

In terms of biological role, binds to 23S rRNA. Forms part of two intersubunit bridges in the 70S ribosome. This Pyrobaculum aerophilum (strain ATCC 51768 / DSM 7523 / JCM 9630 / CIP 104966 / NBRC 100827 / IM2) protein is Large ribosomal subunit protein uL14.